The primary structure comprises 205 residues: Holliday junction branch migration complex subunit RuvA (205 aa).

A domain I region spans residues 1–64; that stretch reads MIGRLRGIIL…EDAQLLFGFN (64 aa). Residues 65–142 are domain II; it reads DKQERALFRE…KGLSGDLFNP (78 aa). The tract at residues 143 to 156 is flexible linker; the sequence is VSDIPLASPASAES. The tract at residues 157–205 is domain III; sequence RASDPEAEAAAALVALGYKPQEASRMISKIARPEADCETLIRDALRAAL.

It belongs to the RuvA family. Homotetramer. Forms an RuvA(8)-RuvB(12)-Holliday junction (HJ) complex. HJ DNA is sandwiched between 2 RuvA tetramers; dsDNA enters through RuvA and exits via RuvB. An RuvB hexamer assembles on each DNA strand where it exits the tetramer. Each RuvB hexamer is contacted by two RuvA subunits (via domain III) on 2 adjacent RuvB subunits; this complex drives branch migration. In the full resolvosome a probable DNA-RuvA(4)-RuvB(12)-RuvC(2) complex forms which resolves the HJ.

Its subcellular location is the cytoplasm. Its function is as follows. The RuvA-RuvB-RuvC complex processes Holliday junction (HJ) DNA during genetic recombination and DNA repair, while the RuvA-RuvB complex plays an important role in the rescue of blocked DNA replication forks via replication fork reversal (RFR). RuvA specifically binds to HJ cruciform DNA, conferring on it an open structure. The RuvB hexamer acts as an ATP-dependent pump, pulling dsDNA into and through the RuvAB complex. HJ branch migration allows RuvC to scan DNA until it finds its consensus sequence, where it cleaves and resolves the cruciform DNA. The protein is Holliday junction branch migration complex subunit RuvA of Pectobacterium carotovorum subsp. carotovorum (strain PC1).